Reading from the N-terminus, the 214-residue chain is Ribosomal RNA small subunit methyltransferase G (214 aa).

Residues Gly-77, Leu-82, 128 to 129 (VE), and Arg-143 contribute to the S-adenosyl-L-methionine site.

This sequence belongs to the methyltransferase superfamily. RNA methyltransferase RsmG family.

It localises to the cytoplasm. It catalyses the reaction guanosine(527) in 16S rRNA + S-adenosyl-L-methionine = N(7)-methylguanosine(527) in 16S rRNA + S-adenosyl-L-homocysteine. In terms of biological role, specifically methylates the N7 position of guanine in position 527 of 16S rRNA. This is Ribosomal RNA small subunit methyltransferase G from Nitrosococcus oceani (strain ATCC 19707 / BCRC 17464 / JCM 30415 / NCIMB 11848 / C-107).